The chain runs to 445 residues: Putative ankyrin repeat protein L797 (445 aa).

4 ANK repeats span residues 73–102 (FMED…DIYS), 285–314 (NHEH…ELVG), 315–344 (NLYI…DIRQ), and 346–375 (LDAF…IINI).

This chain is Putative ankyrin repeat protein L797, found in Acanthamoeba polyphaga (Amoeba).